Consider the following 402-residue polypeptide: uncharacterized protein (402 aa).

A run of 12 helical transmembrane segments spans residues 23–43, 52–72, 90–110, 121–141, 158–178, 180–200, 228–248, 255–275, 282–302, 309–329, 351–371, and 375–395; these read IVSV…PLAV, LGYG…ATLL, VLYG…SVAI, LLVG…AAIG, WNGI…VLLV, WLGL…GFAL, GMGL…ITLY, ANAV…RLLF, LGGF…LLLL, WVGL…FPAF, LFVD…ANLF, and SMFL…VALH.

Belongs to the major facilitator superfamily. YhhS family.

The protein resides in the cell inner membrane. This is an uncharacterized protein from Pseudomonas aeruginosa (strain ATCC 15692 / DSM 22644 / CIP 104116 / JCM 14847 / LMG 12228 / 1C / PRS 101 / PAO1).